Consider the following 400-residue polypeptide: GTPase Obg (400 aa).

One can recognise an Obg domain in the interval 1-159; it reads MKFVDEVQIR…RTLKLELLLL (159 aa). One can recognise an OBG-type G domain in the interval 160 to 333; that stretch reads ADVGMLGLPN…VCYDILDLLD (174 aa). GTP contacts are provided by residues 166-173, 191-195, 213-216, 283-286, and 314-316; these read GLPNAGKS, FTTLV, DIPG, NKMD, and SAI. The Mg(2+) site is built by Ser-173 and Thr-193.

The protein belongs to the TRAFAC class OBG-HflX-like GTPase superfamily. OBG GTPase family. As to quaternary structure, monomer. The cofactor is Mg(2+).

The protein resides in the cytoplasm. An essential GTPase which binds GTP, GDP and possibly (p)ppGpp with moderate affinity, with high nucleotide exchange rates and a fairly low GTP hydrolysis rate. Plays a role in control of the cell cycle, stress response, ribosome biogenesis and in those bacteria that undergo differentiation, in morphogenesis control. This is GTPase Obg from Aeromonas salmonicida (strain A449).